We begin with the raw amino-acid sequence, 80 residues long: Large ribosomal subunit protein bL31 (80 aa).

4 residues coordinate Zn(2+): cysteine 16, cysteine 18, cysteine 38, and cysteine 41.

Belongs to the bacterial ribosomal protein bL31 family. Type A subfamily. In terms of assembly, part of the 50S ribosomal subunit. Zn(2+) serves as cofactor.

Binds the 23S rRNA. This chain is Large ribosomal subunit protein bL31, found in Mycobacterium avium (strain 104).